The primary structure comprises 577 residues: External alternative NAD(P)H-ubiquinone oxidoreductase B1, mitochondrial (577 aa).

Residues 1–35 (MRGFTYLSKVLHSHSSYSKLLVLCSVSTGGLLVYA) constitute a mitochondrion transit peptide. Position 57 to 87 (57 to 87 (RVVVLGTGWGGTSFLKDVDISSYDVQVVSPR)) interacts with FAD. NAD(+) is bound at residue 221 to 257 (LHFVIVGGGPTGVEFAAELHDYVYEDLVKIYPSVKDF). Residues 378 to 413 (KVMEDISTIFEAADKDDSGTLSVEEFRDVLEDIIIR) enclose the EF-hand domain. Ca(2+) is bound by residues aspartate 391, aspartate 393, serine 395, threonine 397, and glutamate 402. The short motif at 568-577 (YIFGRDSSRI) is the Microbody targeting signal element.

This sequence belongs to the NADH dehydrogenase family. The cofactor is FAD.

Its subcellular location is the mitochondrion inner membrane. It localises to the peroxisome. The catalysed reaction is a quinone + NADH + H(+) = a quinol + NAD(+). The enzyme catalyses a ubiquinone + NADH + H(+) = a ubiquinol + NAD(+). Activity is calcium-dependent with a more pronounced effect at higher pH. Calcium-dependent NAD(P)H dehydrogenase. Binds calcium ions. Alternative NADH-ubiquinone oxidoreductase which catalyzes the oxidation of mitochondrial NADH does not translocate protons across the inner mitochondrial membrane. This Solanum tuberosum (Potato) protein is External alternative NAD(P)H-ubiquinone oxidoreductase B1, mitochondrial (NDB1).